The primary structure comprises 461 residues: MIGSVLYLVNSQMDTLSIITWLLVILPFPILGTLFLIYTKQDWGYRELKSLIKKSTQAIKPYFQYDQRILYKLKESHARTYNLAQYLHRSGGFPVYKNTKVTYFPNGQSKFEEMKKQLLKAEKFIFLEYFIIAEGLMWGEILSILEQKVQEGVEVRVMYDGMLELSTLSFDYAKRLEKIGIKAKVFSPITPFVSTYYNYRDHRKILVIDNKVAFNGGINLADEYINQIERFGYWKDTAVMLEGEGVASFTLMFLQMWSTTNKDYEFAPYLTQNFHEIVANGYVIPYSDSPLDHEKVGENVYIDILNQARDYVYIMTPYLILDSEMEHALQFAAERGVDVKIIMPGIPDKKVPFALAKRYFPALLDAGVKIYEFTPGFVHAKVFIADDIKAVVGTINLDYRSLYHHFECATYMYQTDCLVDIKADFKETLKQSRRVTRSTLQKEKISTKLIGLVVKLVAPLL.

2 helical membrane-spanning segments follow: residues 18–38 (IITW…FLIY) and 124–144 (FIFL…ILSI). 2 PLD phosphodiesterase domains span residues 197 to 224 (YNYR…ADEY) and 374 to 401 (TPGF…DYRS).

This sequence belongs to the phospholipase D family. Cardiolipin synthase subfamily.

The protein resides in the cell membrane. This is an uncharacterized protein from Streptococcus mutans serotype c (strain ATCC 700610 / UA159).